Consider the following 882-residue polypeptide: Valine--tRNA ligase (882 aa).

A 'HIGH' region motif is present at residues 50 to 60 (PNVTGKLHLGH). Positions 526–530 (KMSKS) match the 'KMSKS' region motif. Position 529 (Lys529) interacts with ATP. Positions 810–881 (LEALIDLDLE…VLERIETLKE (72 aa)) form a coiled coil.

The protein belongs to the class-I aminoacyl-tRNA synthetase family. ValS type 1 subfamily. In terms of assembly, monomer.

It localises to the cytoplasm. The catalysed reaction is tRNA(Val) + L-valine + ATP = L-valyl-tRNA(Val) + AMP + diphosphate. Functionally, catalyzes the attachment of valine to tRNA(Val). As ValRS can inadvertently accommodate and process structurally similar amino acids such as threonine, to avoid such errors, it has a 'posttransfer' editing activity that hydrolyzes mischarged Thr-tRNA(Val) in a tRNA-dependent manner. This chain is Valine--tRNA ligase, found in Listeria innocua serovar 6a (strain ATCC BAA-680 / CLIP 11262).